The chain runs to 327 residues: Zinc transport protein ZntB (327 aa).

Residues 1–273 (MEAIKGSDVN…ARRTYTMSLM (273 aa)) are Cytoplasmic-facing. The helical transmembrane segment at 274-294 (AMVFLPSTFLTGLFGVNLGGI) threads the bilayer. The Periplasmic segment spans residues 295-300 (PGGGWR). A helical membrane pass occupies residues 301–321 (FGFSLFCILLVVLIGGVTLWL). The Cytoplasmic segment spans residues 322 to 327 (HRSKWL).

It belongs to the CorA metal ion transporter (MIT) (TC 1.A.35) family.

Its subcellular location is the cell inner membrane. It catalyses the reaction Zn(2+)(out) + H(+)(out) = Zn(2+)(in) + H(+)(in). Functionally, zinc transporter. Acts as a Zn(2+):proton symporter, which likely mediates zinc ion uptake. The protein is Zinc transport protein ZntB of Salmonella agona (strain SL483).